The chain runs to 215 residues: MKTVLLTGFDPFGGESINPAWEVAKSLHEKTIGEYKIISKQVPTVFHKSIRVLKEYIEELSPEMIICIGQAGGRPDITIERVAINIDDARIADNEGNKPVDMPVVEEGPIAYWSTLPMKAIVKKLREEGIPSSVSQTAGTFVCNHLFYGLMHELEKHDKKIKGGFVHIPFLPEQASNYPGQPSMSLSTIRKGIELAIEVATEVEVDIVACGGATH.

Catalysis depends on residues glutamate 80, cysteine 143, and histidine 167.

This sequence belongs to the peptidase C15 family. As to quaternary structure, homotetramer.

It is found in the cytoplasm. It catalyses the reaction Release of an N-terminal pyroglutamyl group from a polypeptide, the second amino acid generally not being Pro.. In terms of biological role, removes 5-oxoproline from various penultimate amino acid residues except L-proline. This Bacillus mycoides (strain KBAB4) (Bacillus weihenstephanensis) protein is Pyrrolidone-carboxylate peptidase.